A 138-amino-acid chain; its full sequence is Large ribosomal subunit protein uL11c (138 aa).

This sequence belongs to the universal ribosomal protein uL11 family. In terms of assembly, part of the ribosomal stalk of the 50S ribosomal subunit. Interacts with L10 and the large rRNA to form the base of the stalk. L10 forms an elongated spine to which L12 dimers bind in a sequential fashion forming a multimeric L10(L12)X complex.

The protein resides in the plastid. It localises to the chloroplast. Forms part of the ribosomal stalk which helps the ribosome interact with GTP-bound translation factors. The polypeptide is Large ribosomal subunit protein uL11c (Cyanidioschyzon merolae (strain NIES-3377 / 10D) (Unicellular red alga)).